We begin with the raw amino-acid sequence, 103 residues long: Truncated secreted TNF-receptor-like protein A53R (103 aa).

The TNFR-Cys 1 repeat unit spans residues 36 to 73 (SCDKGEYLDKRHNQCCNRCPPGEFAKVRCNGNDNTKCE). Disulfide bonds link Cys37/Cys50, Cys51/Cys64, and Cys54/Cys72. Residues 74–103 (RCPPHTYTTIPIILMDVINVENAQPDHLIR) form a TNFR-Cys 2; truncated repeat.

It belongs to the poxviridae A53R protein family.

The sequence is that of Truncated secreted TNF-receptor-like protein A53R from Vaccinia virus (strain Western Reserve) (VACV).